The sequence spans 57 residues: Large ribosomal subunit protein bL32 (57 aa).

The interval Met1 to Lys37 is disordered.

Belongs to the bacterial ribosomal protein bL32 family.

This is Large ribosomal subunit protein bL32 from Escherichia fergusonii (strain ATCC 35469 / DSM 13698 / CCUG 18766 / IAM 14443 / JCM 21226 / LMG 7866 / NBRC 102419 / NCTC 12128 / CDC 0568-73).